A 130-amino-acid polypeptide reads, in one-letter code: Small ribosomal subunit protein uS9 (130 aa).

This sequence belongs to the universal ribosomal protein uS9 family.

The sequence is that of Small ribosomal subunit protein uS9 from Burkholderia thailandensis (strain ATCC 700388 / DSM 13276 / CCUG 48851 / CIP 106301 / E264).